The following is a 102-amino-acid chain: MKKVLALVVAAAMGLSSAAFAAETATTPAPTATTTKAAPAKTTHHKKQHKAAPAQKAQAAKKHHKNAKTEQKAPEQKAQAAKKHAKKHSHQQPAKPAAQPAA.

A signal peptide spans 1 to 21 (MKKVLALVVAAAMGLSSAAFA). Over residues 22–41 (AETATTPAPTATTTKAAPAK) the composition is skewed to low complexity. The propeptide occupies 22–58 (AETATTPAPTATTTKAAPAKTTHHKKQHKAAPAQKAQ). Residues 22-102 (AETATTPAPT…PAKPAAQPAA (81 aa)) form a disordered region. Residues 80 to 90 (AAKKHAKKHSH) are compositionally biased toward basic residues. Residues 91-102 (QQPAKPAAQPAA) are compositionally biased toward low complexity.

This sequence belongs to the Asr family. Post-translationally, proteolytic processing gives rise to the active protein.

Its subcellular location is the periplasm. Functionally, required for growth and/or survival at acidic conditions. In Escherichia coli O17:K52:H18 (strain UMN026 / ExPEC), this protein is Acid shock protein.